The chain runs to 105 residues: ATP-dependent Clp protease adapter protein ClpS (105 aa).

A disordered region spans residues 1–27 (MVVMSAPTEPKSRPGTTGQRESAPEDV).

This sequence belongs to the ClpS family. As to quaternary structure, binds to the N-terminal domain of the chaperone ClpA.

Its function is as follows. Involved in the modulation of the specificity of the ClpAP-mediated ATP-dependent protein degradation. The polypeptide is ATP-dependent Clp protease adapter protein ClpS (Mycolicibacterium paratuberculosis (strain ATCC BAA-968 / K-10) (Mycobacterium paratuberculosis)).